We begin with the raw amino-acid sequence, 745 residues long: A-kinase anchor protein 5 (745 aa).

The disordered stretch occupies residues 1-121; sequence METSVSEIQV…KKKAKSRLKF (121 aa). Residues 1-164 form an essential to the intracellular anchoring function region; it reads METSVSEIQV…EIKAQTQPDD (164 aa). Phosphoserine occurs at positions 4 and 22. Cysteine 36 carries the S-palmitoyl cysteine lipid modification. Basic residues predominate over residues 37–50; sequence FKRRKKANKTKPKA. 2 stretches are compositionally biased toward basic and acidic residues: residues 54–63 and 90–100; these read TAEETKKHTP and SEPAKKQKPPE. The short motif at 74–94 is the AKAP CaM-binding element; the sequence is AGAWASIKGLVTHRKRSEPAK. Cysteine 123 carries S-palmitoyl cysteine lipidation. Residues 162–175 are compositionally biased toward polar residues; that stretch reads PDDQAIQAGSTQGL. 2 disordered regions span residues 162-195 and 215-392; these read PDDQ…ISNS and AIQM…DHTE. Basic and acidic residues-rich tracts occupy residues 180-189 and 222-231; these read LVRDGKKSQE and ELEKETKVIT. A compositionally biased stretch (polar residues) spans 234 to 268; it reads PSVQTQRASLLESSAAGSPRSVTSAAPPSPATTHQ. Positions 285-300 are enriched in basic and acidic residues; sequence GKDDRRKTAAEEKKSG. One copy of the 1; approximate repeat lies at 304–312; it reads LGQAEEAAV. The segment at 304–628 is 28 X 8 AA repeats of V-G-Q-A-E-E-A-T; the sequence is LGQAEEAAVG…PTVDQAEEAI (325 aa). Residues 320 to 327 form a 2; approximate repeat; it reads LSQAGEAT. The stretch at 328-335 is one 3; approximate repeat; that stretch reads AGHPEEAT. A 4; approximate repeat occupies 348–355; sequence LSQAEETT. Residues 356-363 form a 5; approximate repeat; it reads VAQAKETV. One copy of the 6; approximate repeat lies at 364–395; it reads LSQAKEGELSQAKKATVGQAEEATIDHTEKVT. The stretch at 420 to 436 is one 7; approximate repeat; sequence LSQAKEATVVGQAEEAT. The stretch at 445–452 is one 8; approximate repeat; sequence VGQAEEAT. 5 tandem repeats follow at residues 461–468, 469–476, 477–484, 485–492, and 493–500. The tract at residues 466–560 is disordered; sequence EATVGQAEEA…QAEEATVGQA (95 aa). A 14; approximate repeat occupies 501–508; it reads VGQAEEAT. One copy of the 15; approximate repeat lies at 517-524; it reads VDQAEEAT. 4 repeat units span residues 525–532, 533–540, 541–548, and 549–556. Basic and acidic residues predominate over residues 535–546; sequence HTEKVTVDHAEE. A 20; approximate repeat occupies 557 to 564; it reads VGQAEKVT. The stretch at 565–572 is repeat 21; that stretch reads VDHAEEAT. The stretch at 573-580 is one 22; approximate repeat; sequence VGQAEEAT. One copy of the 23; approximate repeat lies at 581–588; it reads VGQAEKVT. The 24; approximate repeat unit spans residues 589-596; sequence VDHAEEAT. Residues 597 to 604 form repeat 25; that stretch reads VGQAEEAT. A 26; approximate repeat occupies 605-612; sequence VGQAEKVT. Residues 613–620 form a 27; approximate repeat; it reads VDQAEEPT. Residues 617–651 form a disordered region; it reads EEPTVDQAEEAISSHAPDLKENGIDTEKPRSEESK. Residues 621 to 628 form a 28; approximate repeat; that stretch reads VDQAEEAI. The segment covering 633–651 has biased composition (basic and acidic residues); that stretch reads PDLKENGIDTEKPRSEESK. Residues 706–727 form an RII-beta subunit binding domain region; the sequence is YETLLIETASSLVKNAIELSVE. The segment at 728 to 745 is tethers NFATC2 to CRAC channels; the sequence is QLVNEMVSEDNQINTLFQ.

As to quaternary structure, binding protein for dimer of the RII-beta regulatory subunit of cAMP-dependent protein kinase (PKA) and also for the protein kinase C (PKC) and the phosphatase calcineurin (PP2B). Each enzyme is inhibited when bound to the anchoring protein. Also binds the beta2-adrenergic receptor. Part of a complex containing AKAP5, ADCY5, ADCY6 and PDE4C. Interacts with ADCY8, and enhances its phosphorylation at lipid rafts. Interacts with ORAI1 (isoform alpha) (via N-terminus) upon store depletion and in response to LTC4. Does not interact with ORAI2 and ORAI3 paralogs. Interacts (via leucine zipper domain) with NFATC2/NFAT1. Interacts with calmodulin; the interaction is calcium-independent. Interacts with KCNQ2; the interaction may help KCNQ2 channel complex to retain calcium-bound calmodulin. Interacts with KCNK2; the channel is recruited to postsynaptic microdomains by AKAP5 where it can integrate neurotransmitter receptor signals. Part of a complex composed of AKAP5 and ADRB2. Post-translationally, palmitoylated. Palmitoylation at Cys-36 and Cys-123 play a key role in the targeting of AKAP5 to lipid rafts. Palmitoylation by ZDHHC2 is required for AKAP5 function in LTP-stimulated recycling endosome exocytosis.

It localises to the postsynaptic recycling endosome membrane. Its subcellular location is the cell projection. The protein resides in the dendrite. It is found in the postsynaptic cell membrane. In terms of biological role, multivalent scaffold protein that anchors the cAMP-dependent protein kinase/PKA to cytoskeletal and/or organelle-associated proteins, targeting the signal carried by cAMP to specific intracellular effectors. Association with the beta2-adrenergic receptor (beta2-AR) not only regulates beta2-AR signaling pathway, but also the activation by PKA by switching off the beta2-AR signaling cascade. Plays a role in long term synaptic potentiation by regulating protein trafficking from the dendritic recycling endosomes to the plasma membrane and controlling both structural and functional plasticity at excitatory synapses. In hippocampal pyramidal neurons, recruits KCNK2/TREK-1 channel at postsynaptic dense bodies microdomains and converts it to a leak channel no longer sensitive to stimulation by arachidonic acid, acidic pH or mechanical stress, nor inhibited by Gq-coupled receptors but still under the negative control of Gs-coupled receptors. Associates with ORAI1 pore-forming subunit of CRAC channels in Ca(2+) signaling microdomains where it recruits NFATC2/NFAT1 and couples store-operated Ca(2+) influx to calmodulin and calcineurin signaling and activation of NFAT-dependent transcriptional responses. The chain is A-kinase anchor protein 5 (Akap5) from Mus musculus (Mouse).